We begin with the raw amino-acid sequence, 418 residues long: MSIIKNSVWNLFGYAIPTLIAIPSLGFLARGLGPEGFGVYTIAIALVGYAGIFDVGLTRSVIREIAIHRDNHHERTKVISTSTSFLVLFSCFGAFLLLIFSDGIVNYLKISGVEHSDIQLAFKLLAICIPLFILNQLWSAILEGDEKFGIVNIQKSISSSCIAGIPAIFVFYSATLSAAVAGLIFARVISILVSAYYVRNDIKISGVHFCYKTFKRLFFFGGWMTVSNIISPVMVYFDRFIVSNIMGADKVAFYSAPAEVILKLGIIPAAIGRAVFPRLSNIKDFKEFKRNVNKSLLLMFLICLPVIIIGLLYSGLVLKIWFGENYQINSFNILNVLLIGFFFNALAMIPFSAIQALGKSKITALIHCAELVPYLALLYFMVEKYGLLGAAISWSIRVILDALLLQWLYTRMCSVYEN.

Helical transmembrane passes span 8-28 (VWNL…LGFL), 37-57 (FGVY…DVGL), 85-105 (FLVL…DGIV), 124-144 (LLAI…ILEG), 165-185 (IPAI…GLIF), 217-237 (LFFF…MVYF), 251-271 (VAFY…PAAI), 297-317 (LLMF…SGLV), 334-354 (LNVL…FSAI), 362-382 (ITAL…YFMV), and 385-405 (YGLL…ALLL).

Belongs to the polysaccharide synthase family.

It localises to the cell inner membrane. Its pathway is bacterial outer membrane biogenesis; lipopolysaccharide biosynthesis. In terms of biological role, could be an O-antigen transporter. In Shigella flexneri, this protein is Putative O-antigen transporter (rfbE).